The chain runs to 371 residues: DNA replication and repair protein RecF (371 aa).

30–37 (GENAQGKT) serves as a coordination point for ATP.

Belongs to the RecF family.

The protein resides in the cytoplasm. In terms of biological role, the RecF protein is involved in DNA metabolism; it is required for DNA replication and normal SOS inducibility. RecF binds preferentially to single-stranded, linear DNA. It also seems to bind ATP. The protein is DNA replication and repair protein RecF of Lysinibacillus sphaericus (strain C3-41).